The primary structure comprises 158 residues: Transcription factor BTF3 homolog 4 (158 aa).

The NAC-A/B domain occupies 33-98 (TADDKKLQSS…AEAKPITEML (66 aa)). Positions 124–158 (VLDSKAPKSEDIDEEDDDVPDLAENFDEASKNEAN) are disordered. Over residues 134-150 (DIDEEDDDVPDLAENFD) the composition is skewed to acidic residues.

This sequence belongs to the NAC-beta family.

The polypeptide is Transcription factor BTF3 homolog 4 (BTF3L4) (Gallus gallus (Chicken)).